The sequence spans 85 residues: Defensin-like protein 112 (85 aa).

The N-terminal stretch at 1–24 is a signal peptide; the sequence is MAISKKMLTTFVLTILLAVSFVHC. 4 cysteine pairs are disulfide-bonded: cysteine 40–cysteine 80, cysteine 46–cysteine 71, cysteine 56–cysteine 78, and cysteine 60–cysteine 79.

It belongs to the DEFL family.

The protein resides in the secreted. The polypeptide is Defensin-like protein 112 (Arabidopsis thaliana (Mouse-ear cress)).